We begin with the raw amino-acid sequence, 199 residues long: Probable molybdenum cofactor guanylyltransferase (199 aa).

GTP contacts are provided by residues 6 to 8, lysine 18, aspartate 65, and aspartate 97; that span reads LAG. Position 97 (aspartate 97) interacts with Mg(2+).

This sequence belongs to the MobA family. Mg(2+) serves as cofactor.

It localises to the cytoplasm. It catalyses the reaction Mo-molybdopterin + GTP + H(+) = Mo-molybdopterin guanine dinucleotide + diphosphate. Transfers a GMP moiety from GTP to Mo-molybdopterin (Mo-MPT) cofactor (Moco or molybdenum cofactor) to form Mo-molybdopterin guanine dinucleotide (Mo-MGD) cofactor. This is Probable molybdenum cofactor guanylyltransferase from Staphylococcus aureus (strain Mu50 / ATCC 700699).